The primary structure comprises 515 residues: Maturase K (515 aa).

Belongs to the intron maturase 2 family. MatK subfamily.

The protein localises to the plastid. The protein resides in the chloroplast. In terms of biological role, usually encoded in the trnK tRNA gene intron. Probably assists in splicing its own and other chloroplast group II introns. This Cedrus deodara (Deodar cedar) protein is Maturase K.